The primary structure comprises 168 residues: Ribonuclease H (168 aa).

In terms of domain architecture, RNase H type-1 spans 10 to 151 (NNIPVKIYTD…ADKLATNGKI (142 aa)). Asp19, Glu57, Asp79, and Asp143 together coordinate Mg(2+).

It belongs to the RNase H family. As to quaternary structure, monomer. Mg(2+) is required as a cofactor.

It localises to the cytoplasm. The catalysed reaction is Endonucleolytic cleavage to 5'-phosphomonoester.. Endonuclease that specifically degrades the RNA of RNA-DNA hybrids. The sequence is that of Ribonuclease H from Orientia tsutsugamushi (strain Boryong) (Rickettsia tsutsugamushi).